The chain runs to 383 residues: D-aspartate oxidase 3 (383 aa).

Positions 1 to 17 (MLYALLLLFGGVSTVSS) are cleaved as a signal peptide. Lysine 56 and serine 63 together coordinate FAD. 3 N-linked (GlcNAc...) asparagine glycosylation sites follow: asparagine 152, asparagine 271, and asparagine 320. FAD is bound at residue threonine 339. Residue asparagine 371 is glycosylated (N-linked (GlcNAc...) asparagine).

Belongs to the DAMOX/DASOX family. Requires FAD as cofactor. In terms of tissue distribution, in both sexes, present in coelomocytes (at protein level). Expressed in hypodermal cells and the proximal gonadal sheath cells in adult hermaphrodites (at protein level). Also expressed in probable head mesodermal cells and unidentified cells in the head, and vulval muscles in adult hermaphrodites. Expressed in the seminal vesicle, spicule and tail cells in adult males (at protein level).

It is found in the secreted. The catalysed reaction is D-aspartate + O2 + H2O = oxaloacetate + H2O2 + NH4(+). It catalyses the reaction D-glutamate + O2 + H2O = H2O2 + 2-oxoglutarate + NH4(+). Its function is as follows. Selectively catalyzes the oxidative deamination of acidic amino acids. Plays a role in the egg-laying events and maturation processes of the reproductive organs. The polypeptide is D-aspartate oxidase 3 (ddo-3) (Caenorhabditis elegans).